The sequence spans 553 residues: Putative transport protein YidE (553 aa).

5 consecutive transmembrane segments (helical) span residues 4 to 24, 28 to 48, 65 to 85, 95 to 115, and 158 to 178; these read IALT…IGNV, GIGL…HFVS, FGLI…FFAS, LFAV…HKLF, and MSYA…MWML. 2 RCK C-terminal domains span residues 191 to 276 and 279 to 361; these read QQHE…VIGQ and DTSL…VLGN. The next 6 helical transmembrane spans lie at 371-391, 393-413, 431-448, 464-484, 493-513, and 533-553; these read MLPV…PVFV, GFPA…ALIL, NLAL…VVGL, LSWI…VGIL, YLTM…LAFA, and LVMF…WSIG.

This sequence belongs to the AAE transporter (TC 2.A.81) family. YidE subfamily.

The protein localises to the cell membrane. The chain is Putative transport protein YidE from Shigella sonnei (strain Ss046).